The sequence spans 542 residues: Chaperonin GroEL 1 (542 aa).

Residues 29–32 (TLGP), 86–90 (DGTTT), Gly-413, 477–479 (NAA), and Asp-493 each bind ATP.

This sequence belongs to the chaperonin (HSP60) family. As to quaternary structure, forms a cylinder of 14 subunits composed of two heptameric rings stacked back-to-back. Interacts with the co-chaperonin GroES.

The protein localises to the cytoplasm. It carries out the reaction ATP + H2O + a folded polypeptide = ADP + phosphate + an unfolded polypeptide.. Functionally, together with its co-chaperonin GroES, plays an essential role in assisting protein folding. The GroEL-GroES system forms a nano-cage that allows encapsulation of the non-native substrate proteins and provides a physical environment optimized to promote and accelerate protein folding. The protein is Chaperonin GroEL 1 of Renibacterium salmoninarum (strain ATCC 33209 / DSM 20767 / JCM 11484 / NBRC 15589 / NCIMB 2235).